A 337-amino-acid chain; its full sequence is Phenylalanine--tRNA ligase alpha subunit (337 aa).

Glu-252 contacts Mg(2+).

Belongs to the class-II aminoacyl-tRNA synthetase family. Phe-tRNA synthetase alpha subunit type 1 subfamily. As to quaternary structure, tetramer of two alpha and two beta subunits. Requires Mg(2+) as cofactor.

It localises to the cytoplasm. It carries out the reaction tRNA(Phe) + L-phenylalanine + ATP = L-phenylalanyl-tRNA(Phe) + AMP + diphosphate + H(+). In Francisella tularensis subsp. mediasiatica (strain FSC147), this protein is Phenylalanine--tRNA ligase alpha subunit.